The chain runs to 967 residues: Leucine--tRNA ligase (967 aa).

A 'HIGH' region motif is present at residues 43–53; sequence PYLSGHLHVGH. Residues 650 to 654 carry the 'KMSKS' region motif; sequence KMSKS. K653 is an ATP binding site.

The protein belongs to the class-I aminoacyl-tRNA synthetase family.

The protein localises to the cytoplasm. It carries out the reaction tRNA(Leu) + L-leucine + ATP = L-leucyl-tRNA(Leu) + AMP + diphosphate. In Pyrococcus abyssi (strain GE5 / Orsay), this protein is Leucine--tRNA ligase.